A 249-amino-acid chain; its full sequence is Segregation and condensation protein A (249 aa).

The protein belongs to the ScpA family. In terms of assembly, component of a cohesin-like complex composed of ScpA, ScpB and the Smc homodimer, in which ScpA and ScpB bind to the head domain of Smc. The presence of the three proteins is required for the association of the complex with DNA.

Its subcellular location is the cytoplasm. Its function is as follows. Participates in chromosomal partition during cell division. May act via the formation of a condensin-like complex containing Smc and ScpB that pull DNA away from mid-cell into both cell halves. The chain is Segregation and condensation protein A from Listeria monocytogenes serotype 4b (strain CLIP80459).